A 590-amino-acid chain; its full sequence is Leucine-rich repeat transmembrane neuronal protein 4 (590 aa).

The N-terminal stretch at 1-30 is a signal peptide; that stretch reads MGFHLITQLKGMSVVLVLLPTLLLVMLTGA. One can recognise an LRRNT domain in the interval 31–61; the sequence is QRACPKNCRCDGKIVYCESHAFADIPENISG. At 31-424 the chain is on the extracellular side; the sequence is QRACPKNCRC…QEYEHVSFHK (394 aa). N-linked (GlcNAc...) asparagine glycosylation is present at N58. LRR repeat units follow at residues 62–83, 86–107, 110–131, 134–155, 158–179, 182–203, 206–226, 230–251, 254–275, and 278–299; these read GSQG…QFAG, QLIW…AFQG, RLKE…TFHP, NLRN…QFKG, KLII…VFQD, NLDF…AFAG, KLKE…AHFP, NLRS…LTWT, SLHN…TFKC, and NLQK…TVNA. A glycan (N-linked (GlcNAc...) asparagine) is linked at N126. N291 is a glycosylation site (N-linked (GlcNAc...) asparagine). The region spanning 311-362 is the LRRCT domain; sequence NMWECSRSICPLFYWLKNFKGNKESTMICAGPKHIQGEKVSDAVETYNICSE. Residues 425–445 traverse the membrane as a helical segment; it reads IIAGSVALFLSVAMILLVIYV. Topologically, residues 446 to 590 are cytoplasmic; sequence SWKRYPASMK…PAIYLERIAN (145 aa).

It belongs to the LRRTM family. As to quaternary structure, peripherally associated with AMPAR complex. AMPAR complex consists of an inner core made of 4 pore-forming GluA/GRIA proteins (GRIA1, GRIA2, GRIA3 and GRIA4) and 4 major auxiliary subunits arranged in a twofold symmetry. One of the two pairs of distinct binding sites is occupied either by CNIH2, CNIH3 or CACNG2, CACNG3. The other harbors CACNG2, CACNG3, CACNG4, CACNG8 or GSG1L. This inner core of AMPAR complex is complemented by outer core constituents binding directly to the GluA/GRIA proteins at sites distinct from the interaction sites of the inner core constituents. Outer core constituents include at least PRRT1, PRRT2, CKAMP44/SHISA9, FRRS1L and NRN1. The proteins of the inner and outer core serve as a platform for other, more peripherally associated AMPAR constituents, including LRRTM4. Alone or in combination, these auxiliary subunits control the gating and pharmacology of the AMPAR complex and profoundly impact their biogenesis and protein processing. Expressed in neuronal tissues.

The protein resides in the cell membrane. It is found in the postsynaptic cell membrane. Functionally, may play a role in the development and maintenance of the vertebrate nervous system. Exhibits strong synaptogenic activity, restricted to excitatory presynaptic differentiation. This is Leucine-rich repeat transmembrane neuronal protein 4 (LRRTM4) from Homo sapiens (Human).